Consider the following 415-residue polypeptide: Histidine--tRNA ligase (415 aa).

This sequence belongs to the class-II aminoacyl-tRNA synthetase family. Homodimer.

The protein resides in the cytoplasm. The enzyme catalyses tRNA(His) + L-histidine + ATP = L-histidyl-tRNA(His) + AMP + diphosphate + H(+). This Clostridium botulinum (strain Kyoto / Type A2) protein is Histidine--tRNA ligase.